A 127-amino-acid chain; its full sequence is Small ribosomal subunit protein uS13 (127 aa).

Residues 96-118 (LPVRGQRTHTNARTRKGPKRGIV) show a composition bias toward basic residues. The tract at residues 96 to 127 (LPVRGQRTHTNARTRKGPKRGIVRAKPAAPAR) is disordered.

The protein belongs to the universal ribosomal protein uS13 family. In terms of assembly, part of the 30S ribosomal subunit. Forms a loose heterodimer with protein S19. Forms two bridges to the 50S subunit in the 70S ribosome.

In terms of biological role, located at the top of the head of the 30S subunit, it contacts several helices of the 16S rRNA. In the 70S ribosome it contacts the 23S rRNA (bridge B1a) and protein L5 of the 50S subunit (bridge B1b), connecting the 2 subunits; these bridges are implicated in subunit movement. Contacts the tRNAs in the A and P-sites. This is Small ribosomal subunit protein uS13 from Myxococcus xanthus (strain DK1622).